The sequence spans 246 residues: Large ribosomal subunit protein uL3 (246 aa).

Position 151 is an N5-methylglutamine (glutamine 151).

Belongs to the universal ribosomal protein uL3 family. In terms of assembly, part of the 50S ribosomal subunit. Forms a cluster with proteins L14 and L19. In terms of processing, methylated by PrmB.

Functionally, one of the primary rRNA binding proteins, it binds directly near the 3'-end of the 23S rRNA, where it nucleates assembly of the 50S subunit. The protein is Large ribosomal subunit protein uL3 of Bartonella bacilliformis (strain ATCC 35685 / KC583 / Herrer 020/F12,63).